Consider the following 646-residue polypeptide: Aquaglycerol porin AQY3 (646 aa).

Positions 1–14 (MSYESGRSSSSSES) are enriched in low complexity. Disordered regions lie at residues 1–68 (MSYE…SRNK) and 175–262 (KNMD…KKRT). Over 1-350 (MSYESGRSSS…AKIRYHMREP (350 aa)) the chain is Cytoplasmic. Basic and acidic residues predominate over residues 19 to 41 (TLKEEPNGKIAWEESVKKSRENN). Over residues 190-201 (TDISRGGSTTSV) the composition is skewed to polar residues. Residues 351 to 371 (FAEFLGTLVLVIFGVGGNLQA) form a helical membrane-spanning segment. Residues 372 to 383 (TVTKGSGGSYES) lie on the Extracellular side of the membrane. The helical transmembrane segment at 384 to 404 (LSFAWGFGCMLGVYVAGGISG) threads the bilayer. Residues 405 to 427 (GHINPAVTISMAIFRKFPWKKVP) lie on the Cytoplasmic side of the membrane. The short motif at 408-410 (NPA) is the NPA 1 element. A helical transmembrane segment spans residues 428–448 (VYIVAQIIGAYFGGAMAYGYF). Over 449-481 (WSSITEFEGGPHIRTTATGACLFTDPKSYVTWR) the chain is Extracellular. The helical transmembrane segment at 482-502 (NAFFDEFIGASILVGCLMALL) threads the bilayer. Over 503–509 (DDSNAPP) the chain is Cytoplasmic. The helical transmembrane segment at 510 to 530 (GNGMTALIIGFLVAAIGMALG) threads the bilayer. Topologically, residues 531–569 (YQTSFTINPARDLGPRIFASMIGYGPHAFHLTHWWWTWG) are extracellular. Residues 538-540 (NPA) carry the NPA 2 motif. A helical membrane pass occupies residues 570–590 (AWGGPIAGGIAGALIYDIFIF). At 591–646 (TGCESPVNYPDNGYIENRVGKLLHAEFHQNDGTVSDESGVNSNSNTGSKKSVPTSS) the chain is on the cytoplasmic side. The tract at residues 621-646 (DGTVSDESGVNSNSNTGSKKSVPTSS) is disordered.

Belongs to the MIP/aquaporin (TC 1.A.8) family.

The protein resides in the cell membrane. It carries out the reaction glycerol(in) = glycerol(out). Its function is as follows. Channel protein that mediates glycerol entry under ethanol stimulation. Does not seem to mediate glycerol uptake under standard conditions. The protein is Aquaglycerol porin AQY3 of Saccharomyces cerevisiae (strain ATCC 204508 / S288c) (Baker's yeast).